The sequence spans 301 residues: Acidic endochitinase (301 aa).

Positions 1–25 (MARTPQSTPLLISLSVLALLQTSYA) are cleaved as a signal peptide. Residues 26–301 (GGIAIYWGQN…GYSSSIKSSV (276 aa)) enclose the GH18 domain. Disulfide bonds link C45–C92 and C75–C82. E152 (proton donor) is an active-site residue. A disulfide bond links C187 and C216.

It belongs to the glycosyl hydrolase 18 family. Chitinase class II subfamily.

The catalysed reaction is Random endo-hydrolysis of N-acetyl-beta-D-glucosaminide (1-&gt;4)-beta-linkages in chitin and chitodextrins.. Defense against chitin containing fungal pathogens. The protein is Acidic endochitinase (CHIT3) of Vitis vinifera (Grape).